The sequence spans 334 residues: Proline-serine-threonine phosphatase-interacting protein 2 (334 aa).

Positions 4–264 (SLFKGNFWSA…SLEMCSIQRD (261 aa)) constitute an F-BAR domain. Positions 66–166 (GQSEINTLKR…AVSRSANLVN (101 aa)) form a coiled coil. The interval 295–322 (VPAGKATGPNLARRGPLPIPKSSPDDPN) is disordered. Phosphotyrosine is present on residues Y323 and Y329.

Post-translationally, phosphorylated on tyrosine.

It is found in the cytoplasm. The protein resides in the membrane. In terms of biological role, binds to F-actin. May be involved in regulation of the actin cytoskeleton. This Homo sapiens (Human) protein is Proline-serine-threonine phosphatase-interacting protein 2 (PSTPIP2).